Reading from the N-terminus, the 795-residue chain is Serine/threonine-protein kinase MARK1 (795 aa).

Residues Met-1 to Pro-41 form a disordered region. The residue at position 5 (Thr-5) is a Phosphothreonine. Positions Tyr-60–Met-311 constitute a Protein kinase domain. ATP-binding positions include Ile-66 to Val-74 and Lys-89. Catalysis depends on Asp-182, which acts as the Proton acceptor. Position 208 is a phosphothreonine (Thr-208). Thr-215 bears the Phosphothreonine; by LKB1 and TAOK1 mark. Position 219 is a phosphoserine; by GSK3-beta (Ser-219). The 42-residue stretch at Asp-329–Arg-370 folds into the UBA domain. Disordered regions lie at residues Gly-377–Ser-498 and Gln-518–Ser-699. Phosphoserine is present on residues Ser-382, Ser-390, Ser-393, Ser-403, Ser-423, and Ser-444. Over residues Cys-387–Ser-403 the composition is skewed to polar residues. Over residues Ser-447 to Arg-459 the composition is skewed to basic and acidic residues. Residues Gly-462 to Thr-473 show a composition bias toward polar residues. Position 475 is a phosphoserine (Ser-475). Over residues Thr-486–Ser-495 the composition is skewed to polar residues. Low complexity-rich tracts occupy residues Ser-523–Ala-547 and Pro-585–Pro-599. Position 588 is a phosphoserine (Ser-588). Position 613 is a phosphothreonine; by PKC/PRKCZ (Thr-613). Over residues Gly-647–Thr-657 the composition is skewed to polar residues. Basic and acidic residues-rich tracts occupy residues Val-661–Thr-676 and Asp-683–Pro-697. Ser-666 is subject to Phosphoserine. One can recognise a KA1 domain in the interval Asp-746 to Leu-795.

This sequence belongs to the protein kinase superfamily. CAMK Ser/Thr protein kinase family. SNF1 subfamily. In terms of assembly, interacts with MAPT/TAU. It depends on Mg(2+) as a cofactor. Post-translationally, phosphorylated at Thr-215 by STK11/LKB1 in complex with STE20-related adapter-alpha (STRADA) pseudo kinase and CAB39. Phosphorylation at Thr-215 by TAOK1 activates the kinase activity, leading to phosphorylation and detachment of MAPT/TAU from microtubules. Phosphorylation at Ser-219 by GSK3-beta (GSK3B) inhibits the kinase activity. Phosphorylation at Thr-613 by PRKCZ/aPKC in polarized epithelial cells inhibits the kinase activity.

The protein localises to the cell membrane. It is found in the cytoplasm. It localises to the cytoskeleton. Its subcellular location is the cell projection. The protein resides in the dendrite. It catalyses the reaction L-seryl-[protein] + ATP = O-phospho-L-seryl-[protein] + ADP + H(+). The enzyme catalyses L-threonyl-[protein] + ATP = O-phospho-L-threonyl-[protein] + ADP + H(+). The catalysed reaction is L-seryl-[tau protein] + ATP = O-phospho-L-seryl-[tau protein] + ADP + H(+). It carries out the reaction L-threonyl-[tau protein] + ATP = O-phospho-L-threonyl-[tau protein] + ADP + H(+). With respect to regulation, inhibited by phosphorylation at Ser-219. Activated by phosphorylation on Thr-215. Serine/threonine-protein kinase. Involved in cell polarity and microtubule dynamics regulation. Phosphorylates DCX, MAP2 and MAP4. Phosphorylates the microtubule-associated protein MAPT/TAU. Involved in cell polarity by phosphorylating the microtubule-associated proteins MAP2, MAP4 and MAPT/TAU at KXGS motifs, causing detachment from microtubules, and their disassembly. Involved in the regulation of neuronal migration through its dual activities in regulating cellular polarity and microtubule dynamics, possibly by phosphorylating and regulating DCX. Also acts as a positive regulator of the Wnt signaling pathway, probably by mediating phosphorylation of dishevelled proteins (DVL1, DVL2 and/or DVL3). The polypeptide is Serine/threonine-protein kinase MARK1 (Mus musculus (Mouse)).